Reading from the N-terminus, the 305-residue chain is MQKYDIKTFQGMILALQDYWAQQGCTIVQPLDMEVGAGTSHPMTCLRALGPEPIATAYVQPSRRPTDGRYGENPNRLQHYYQFQVIIKPSPDNIQELYLGSLRVLGVDPCVHDIRFVEDNWENPTLGAWGLGWEVWLNGMEVTQFTYFQQVGGLECKPVTGEITYGIERLAMYIQGVDSVYDLVWTDGPLGKVTYGDIFHQNEVEQSTYNFEHADVDFLFTYFDQCEKECKYLLELEKPLPLPAYERILKAAHAFNLLDARKAISVTERQRYILRIRNLTKSVAEAYYASREALGFPMCKKSEQK.

The protein belongs to the class-II aminoacyl-tRNA synthetase family. As to quaternary structure, tetramer of two alpha and two beta subunits.

The protein localises to the cytoplasm. The catalysed reaction is tRNA(Gly) + glycine + ATP = glycyl-tRNA(Gly) + AMP + diphosphate. The sequence is that of Glycine--tRNA ligase alpha subunit (glyQ) from Vibrio cholerae serotype O1 (strain ATCC 39315 / El Tor Inaba N16961).